The primary structure comprises 616 residues: Electron transfer flavoprotein-ubiquinone oxidoreductase, mitochondrial (616 aa).

The N-terminal 32 residues, 1–32 (MLVRLTKLSCPAYQWFHALKIKKCLPLCAPRC), are a transit peptide targeting the mitochondrion. FAD is bound at residue 70 to 84 (VVIVGAGPAGLSAAI). Lysine 95 is subject to N6-acetyllysine. An intramembrane segment occupies 108–129 (IGAHTLSGACLDPAAFKELFPD). N6-acetyllysine occurs at positions 131 and 222. A ubiquinone is bound by residues glycine 304 and glycine 305. Lysine 356 and lysine 415 each carry N6-acetyllysine. Residues 427-446 (AGLHVTEYEDNLKQSWVWKE) lie within the membrane without spanning it. Serine 550 carries the post-translational modification Phosphoserine. Cysteine 560, cysteine 585, cysteine 588, and cysteine 591 together coordinate [4Fe-4S] cluster. Positions 576 to 605 (FRLQINAQNCVHCKTCDIKDPSQNINWVVP) constitute a 4Fe-4S ferredoxin-type domain.

The protein belongs to the ETF-QO/FixC family. As to quaternary structure, monomer. [4Fe-4S] cluster serves as cofactor. The cofactor is FAD.

It localises to the mitochondrion inner membrane. It carries out the reaction a ubiquinone + reduced [electron-transfer flavoprotein] = a ubiquinol + oxidized [electron-transfer flavoprotein] + H(+). In terms of biological role, accepts electrons from ETF and reduces ubiquinone. The protein is Electron transfer flavoprotein-ubiquinone oxidoreductase, mitochondrial (Etfdh) of Rattus norvegicus (Rat).